Consider the following 241-residue polypeptide: Chloride intracellular channel protein 1 (241 aa).

Ala2 bears the N-acetylalanine mark. The interval 2–90 (AEEQPQVELF…EEFLEAVLCP (89 aa)) is required for insertion into the membrane. An N6-acetyllysine modification is found at Lys13. The short motif at 24 to 27 (CPFS) is the G-site element. A disulfide bridge links Cys24 with Cys59. The chain crosses the membrane as a helical span at residues 26–46 (FSQRLFMVLWLKGVTFNVTTV). Residues 93-233 (YPKLAALNPE…PDDEEIELAY (141 aa)) form the GST C-terminal domain. At Lys119 the chain carries N6-acetyllysine. Ser121 carries the phosphoserine modification. At Lys131 the chain carries N6-acetyllysine. Position 156 is a phosphoserine (Ser156). Tyr233 bears the Phosphotyrosine mark.

Belongs to the chloride channel CLIC family. In terms of assembly, monomer. Homodimer (in vitro). Interacts with TRAPPC2. Dimerization requires a conformation change that leads to the exposure of a large hydrophobic surface. In vivo, this may lead to membrane insertion.

Its subcellular location is the nucleus. The protein localises to the nucleus membrane. The protein resides in the cytoplasm. It localises to the cell membrane. It is found in the endoplasmic reticulum. It carries out the reaction L-dehydroascorbate + 2 glutathione = glutathione disulfide + L-ascorbate. It catalyses the reaction chloride(in) = chloride(out). The enzyme catalyses iodide(out) = iodide(in). The catalysed reaction is thiocyanate(in) = thiocyanate(out). It carries out the reaction nitrate(in) = nitrate(out). It catalyses the reaction bromide(in) = bromide(out). The enzyme catalyses fluoride(in) = fluoride(out). Functionally, in the soluble state, catalyzes glutaredoxin-like thiol disulfide exchange reactions with reduced glutathione as electron donor. Reduces selenite and dehydroascorbate and may act as an antioxidant during oxidative stress response. Can insert into membranes and form voltage-dependent multi-ion conductive channels. Membrane insertion seems to be redox-regulated and may occur only under oxidizing conditions. Involved in regulation of the cell cycle. This is Chloride intracellular channel protein 1 (CLIC1) from Bos taurus (Bovine).